The following is a 61-amino-acid chain: Small ribosomal subunit protein uS14 (61 aa).

4 residues coordinate Zn(2+): Cys24, Cys27, Cys40, and Cys43.

The protein belongs to the universal ribosomal protein uS14 family. Zinc-binding uS14 subfamily. Part of the 30S ribosomal subunit. Contacts proteins S3 and S10. It depends on Zn(2+) as a cofactor.

Functionally, binds 16S rRNA, required for the assembly of 30S particles and may also be responsible for determining the conformation of the 16S rRNA at the A site. The chain is Small ribosomal subunit protein uS14 from Pseudothermotoga lettingae (strain ATCC BAA-301 / DSM 14385 / NBRC 107922 / TMO) (Thermotoga lettingae).